Consider the following 61-residue polypeptide: Large ribosomal subunit protein uL30 (61 aa).

This sequence belongs to the universal ribosomal protein uL30 family. Part of the 50S ribosomal subunit.

The polypeptide is Large ribosomal subunit protein uL30 (Saccharophagus degradans (strain 2-40 / ATCC 43961 / DSM 17024)).